The chain runs to 443 residues: Probable D-serine dehydratase (443 aa).

An N6-(pyridoxal phosphate)lysine modification is found at K106.

This sequence belongs to the serine/threonine dehydratase family. DsdA subfamily. Pyridoxal 5'-phosphate serves as cofactor.

The catalysed reaction is D-serine = pyruvate + NH4(+). In Cupriavidus pinatubonensis (strain JMP 134 / LMG 1197) (Cupriavidus necator (strain JMP 134)), this protein is Probable D-serine dehydratase.